Consider the following 163-residue polypeptide: Small heat shock protein C4 (163 aa).

Residues 53 to 163 (YNNKILSPRT…QSKAKKIKIS (111 aa)) form the sHSP domain.

It belongs to the small heat shock protein (HSP20) family.

This Rickettsia felis (strain ATCC VR-1525 / URRWXCal2) (Rickettsia azadi) protein is Small heat shock protein C4 (hspc4-1).